The sequence spans 302 residues: S-adenosylmethionine sensor upstream of mTORC1 (302 aa).

Residues R73, G132, and D150 each coordinate S-adenosyl-L-homocysteine. The S-adenosyl-L-methionine site is built by R73, G132, D150, L151, D162, F163, and S196. S-adenosyl-L-homocysteine-binding residues include D162, F163, and S196.

The protein belongs to the BMT2/SAMTOR family.

Functionally, S-adenosyl-L-methionine-binding protein. It is unclear whether this protein acts as a sensor of S-adenosyl-L-methionine to signal methionine sufficiency to mTORC1. Probably acts as a S-adenosyl-L-methionine-dependent methyltransferase. The polypeptide is S-adenosylmethionine sensor upstream of mTORC1 (Drosophila melanogaster (Fruit fly)).